A 385-amino-acid chain; its full sequence is Chaperone protein DnaJ (385 aa).

The 66-residue stretch at 5 to 70 (DFYDVLGVSR…QSRAAYDQFG (66 aa)) folds into the J domain. The CR-type zinc-finger motif lies at 143 to 221 (GKKAQVRVPG…CHGAGRVEKE (79 aa)). Zn(2+) is bound by residues C156, C159, C173, C176, C195, C198, C209, and C212. CXXCXGXG motif repeat units lie at residues 156 to 163 (CEVCTGTG), 173 to 180 (CPTCQGHG), 195 to 202 (CPTCHGRG), and 209 to 216 (CTNCHGAG).

Belongs to the DnaJ family. Homodimer. Zn(2+) is required as a cofactor.

It is found in the cytoplasm. Participates actively in the response to hyperosmotic and heat shock by preventing the aggregation of stress-denatured proteins and by disaggregating proteins, also in an autonomous, DnaK-independent fashion. Unfolded proteins bind initially to DnaJ; upon interaction with the DnaJ-bound protein, DnaK hydrolyzes its bound ATP, resulting in the formation of a stable complex. GrpE releases ADP from DnaK; ATP binding to DnaK triggers the release of the substrate protein, thus completing the reaction cycle. Several rounds of ATP-dependent interactions between DnaJ, DnaK and GrpE are required for fully efficient folding. Also involved, together with DnaK and GrpE, in the DNA replication of plasmids through activation of initiation proteins. This Parvibaculum lavamentivorans (strain DS-1 / DSM 13023 / NCIMB 13966) protein is Chaperone protein DnaJ.